A 143-amino-acid polypeptide reads, in one-letter code: Large ribosomal subunit protein uL16 (143 aa).

Belongs to the universal ribosomal protein uL16 family. Part of the 50S ribosomal subunit.

Functionally, binds 23S rRNA and is also seen to make contacts with the A and possibly P site tRNAs. This Fusobacterium nucleatum subsp. nucleatum (strain ATCC 25586 / DSM 15643 / BCRC 10681 / CIP 101130 / JCM 8532 / KCTC 2640 / LMG 13131 / VPI 4355) protein is Large ribosomal subunit protein uL16.